A 210-amino-acid chain; its full sequence is Somatotropin-1 (210 aa).

The N-terminal stretch at Met1–Ala22 is a signal peptide. His38 is a Zn(2+) binding site. Cys71 and Cys183 are oxidised to a cystine. Glu192 lines the Zn(2+) pocket. Cys200 and Cys208 are disulfide-bonded.

It belongs to the somatotropin/prolactin family.

It localises to the secreted. Functionally, growth hormone plays an important role in growth control and is involved in the regulation of several anabolic processes. Implicated as an osmoregulatory substance important for seawater adaptation. The sequence is that of Somatotropin-1 (gh1) from Oncorhynchus nerka (Sockeye salmon).